Consider the following 314-residue polypeptide: Methionyl-tRNA formyltransferase (314 aa).

112–115 (SLLP) serves as a coordination point for (6S)-5,6,7,8-tetrahydrofolate.

Belongs to the Fmt family.

The enzyme catalyses L-methionyl-tRNA(fMet) + (6R)-10-formyltetrahydrofolate = N-formyl-L-methionyl-tRNA(fMet) + (6S)-5,6,7,8-tetrahydrofolate + H(+). Its function is as follows. Attaches a formyl group to the free amino group of methionyl-tRNA(fMet). The formyl group appears to play a dual role in the initiator identity of N-formylmethionyl-tRNA by promoting its recognition by IF2 and preventing the misappropriation of this tRNA by the elongation apparatus. The protein is Methionyl-tRNA formyltransferase of Legionella pneumophila (strain Corby).